We begin with the raw amino-acid sequence, 194 residues long: Dephospho-CoA kinase (194 aa).

In terms of domain architecture, DPCK spans 4–194 (ALGLTGSIGM…HLVSKLTEGT (191 aa)). 12–17 (GMGKST) serves as a coordination point for ATP.

The protein belongs to the CoaE family.

It is found in the cytoplasm. The catalysed reaction is 3'-dephospho-CoA + ATP = ADP + CoA + H(+). It participates in cofactor biosynthesis; coenzyme A biosynthesis; CoA from (R)-pantothenate: step 5/5. Functionally, catalyzes the phosphorylation of the 3'-hydroxyl group of dephosphocoenzyme A to form coenzyme A. The protein is Dephospho-CoA kinase of Jannaschia sp. (strain CCS1).